Here is a 95-residue protein sequence, read N- to C-terminus: Large ribosomal subunit protein bL25 (95 aa).

It belongs to the bacterial ribosomal protein bL25 family. Part of the 50S ribosomal subunit; part of the 5S rRNA/L5/L18/L25 subcomplex. Contacts the 5S rRNA. Binds to the 5S rRNA independently of L5 and L18.

Functionally, this is one of the proteins that binds to the 5S RNA in the ribosome where it forms part of the central protuberance. The chain is Large ribosomal subunit protein bL25 from Tolumonas auensis (strain DSM 9187 / NBRC 110442 / TA 4).